The chain runs to 513 residues: MSEFILEMRGITKQFPGVKALDNVNFKVREGEIHALCGENGAGKSTLMKVLSGVYPYGTYDGEIVFKGEVCKFKNIKQSEQLGIVIIHQELALIPYLSIAENIFLGNERAKKGIINWNETIAQTKKLLQKVGLEESPHTLVGQLGVGKQQLVEIAKALAKDVKLLILDEPTAALNEDDSENLLNLLLELKKQGLSAIIISHKLNEITKVADSITILRDGKTIETLDMKHDEVTEDRIIRGMVGRDLTNRYPARTPKIGEVIFEVKNWTVYHPIYSERKVLDHINLSIRRGEIVGIAGLMGAGRTELAMSIFGRSYGKKISGEIWKNGVKIDVSDVSKAIANGIAYVTEDRKGNGLILMEDIRKNITLSRLGKISNHFVVDENQEIVESERFRDQFKIKTPSVFQKVEALSGGNQQKVVLSKWIFAEPDILILDEPTRGIDVGAKYEIYTIIQQLADAGKGILMISSELPEILGMCDRIYVMSEGRITGEVSREEATQEKLMRLMTKTAIQEGA.

ABC transporter domains are found at residues 6-243 (LEMR…GMVG) and 264-508 (VKNW…TKTA). ATP is bound at residue 38-45 (GENGAGKS).

It belongs to the ABC transporter superfamily.

Its subcellular location is the cell membrane. The enzyme catalyses L-arabinose(out) + ATP + H2O = L-arabinose(in) + ADP + phosphate + H(+). In terms of biological role, part of the binding-protein-dependent transport system for L-arabinose. Probably responsible for energy coupling to the transport system. The protein is L-arabinose transport ATP-binding protein AraG (araG) of Geobacillus stearothermophilus (Bacillus stearothermophilus).